We begin with the raw amino-acid sequence, 195 residues long: Exosome complex component CSL4 (195 aa).

Ser21 and Ser98 each carry phosphoserine. The S1 motif domain occupies 66-147; it reads DVGAIVTCKV…AQSNYLLTTA (82 aa).

It belongs to the CSL4 family. In terms of assembly, component of the RNA exosome core complex (Exo-9), composed of EXOSC1, EXOSC2, EXOSC3, EXOSC4, EXOSC5, EXOSC6, EXOSC7, EXOSC8 and EXOSC9; within the complex interacts with EXOSC6. The catalytically inactive RNA exosome core complex (Exo-9) associates with the catalytic subunit EXOSC10/RRP6. Exo-9 may associate with DIS3 to form the nucleolar exosome complex, or DIS3L to form the cytoplasmic exosome complex. Exo-9 is formed by a hexameric base ring consisting of the heterodimers EXOSC4-EXOSC9, EXOSC5-EXOSC8 and EXOSC6-EXOSC7, and a cap ring consisting of EXOSC1, EXOSC2 and EXOSC3. The RNA exosome complex associates with cofactors C1D/RRP47, MPHOSPH6/MPP6 and MTREX/MTR4. Interacts with DDX60.

Its subcellular location is the nucleus. The protein localises to the nucleolus. The protein resides in the cytoplasm. In terms of biological role, non-catalytic component of the RNA exosome complex which has 3'-&gt;5' exoribonuclease activity and participates in a multitude of cellular RNA processing and degradation events. In the nucleus, the RNA exosome complex is involved in proper maturation of stable RNA species such as rRNA, snRNA and snoRNA, in the elimination of RNA processing by-products and non-coding 'pervasive' transcripts, such as antisense RNA species and promoter-upstream transcripts (PROMPTs), and of mRNAs with processing defects, thereby limiting or excluding their export to the cytoplasm. The RNA exosome may be involved in Ig class switch recombination (CSR) and/or Ig variable region somatic hypermutation (SHM) by targeting AICDA deamination activity to transcribed dsDNA substrates. In the cytoplasm, the RNA exosome complex is involved in general mRNA turnover and specifically degrades inherently unstable mRNAs containing AU-rich elements (AREs) within their 3' untranslated regions, and in RNA surveillance pathways, preventing translation of aberrant mRNAs. It seems to be involved in degradation of histone mRNA. The catalytic inactive RNA exosome core complex of 9 subunits (Exo-9) is proposed to play a pivotal role in the binding and presentation of RNA for ribonucleolysis, and to serve as a scaffold for the association with catalytic subunits and accessory proteins or complexes. EXOSC1 as peripheral part of the Exo-9 complex stabilizes the hexameric ring of RNase PH-domain subunits through contacts with EXOSC6 and EXOSC8. The polypeptide is Exosome complex component CSL4 (EXOSC1) (Homo sapiens (Human)).